A 443-amino-acid chain; its full sequence is Mitochondrial enolase superfamily member 1 (443 aa).

Residues 24-26 (GAD) and Tyr34 contribute to the substrate site. Ser148 is modified (phosphoserine). Residue Lys220 coordinates substrate. Lys222 (proton donor/acceptor) is an active-site residue. Asp250 serves as a coordination point for Mg(2+). Residues Asn252, Glu276, Glu305, 355 to 357 (HAG), and Glu386 contribute to the substrate site. Mg(2+) contacts are provided by Glu276 and Glu305. Residue His355 is part of the active site.

This sequence belongs to the mandelate racemase/muconate lactonizing enzyme family. ENOSF1 subfamily. Mg(2+) serves as cofactor. Could be sumoylated.

It localises to the mitochondrion. It carries out the reaction L-fuconate = 2-dehydro-3-deoxy-L-fuconate + H2O. Functionally, plays a role in the catabolism of L-fucose, a sugar that is part of the carbohydrates that are attached to cellular glycoproteins. Catalyzes the dehydration of L-fuconate to 2-keto-3-deoxy-L-fuconate by the abstraction of the 2-proton to generate an enediolate intermediate that is stabilized by the magnesium ion. The sequence is that of Mitochondrial enolase superfamily member 1 (ENOSF1) from Homo sapiens (Human).